We begin with the raw amino-acid sequence, 240 residues long: tRNA (guanine-N(7)-)-methyltransferase (240 aa).

Residues 1–10 are compositionally biased toward polar residues; it reads MTESQDTPIT. The disordered stretch occupies residues 1–20; sequence MTESQDTPITTDGEARPHRR. Glu70, Glu95, Asp122, and Asp145 together coordinate S-adenosyl-L-methionine. The active site involves Asp145. Substrate-binding positions include Lys149, Asp181, and 218-221; that span reads TKFE.

Belongs to the class I-like SAM-binding methyltransferase superfamily. TrmB family.

It carries out the reaction guanosine(46) in tRNA + S-adenosyl-L-methionine = N(7)-methylguanosine(46) in tRNA + S-adenosyl-L-homocysteine. Its pathway is tRNA modification; N(7)-methylguanine-tRNA biosynthesis. Functionally, catalyzes the formation of N(7)-methylguanine at position 46 (m7G46) in tRNA. In Pseudomonas putida (strain W619), this protein is tRNA (guanine-N(7)-)-methyltransferase.